Reading from the N-terminus, the 859-residue chain is MHTPKCRRPSMSATLSHKDLAGLAGCSALAFVLYLNTLNAGFVYDDRRAILANGDVTGARPLANLLRNDFWGTPLVDSGSHGSWRPLCVLSFRLNYLAGGMTPLGYHLVNVMLHCVATWLVFLVARTLLPSRMGVLAAGALFAVHPAHTEAVAGLVGRADLASCVCYLLAYLSYRRHMLNREWGSLILTIMLALAALLCKETAITALLLCGLCDVLSPVGRENSDKVCDGSISGLASFNFQRRFRSLSILGFTLLCGLYCRLSLLPRPSTAFSAADNPTAHESCFWTRTLTFLYLPVANFGILLWPQELSFDWGMEAVSRIRTLWDARNILTAGFYGSLVAILWKGSGLRSAASPMDFAEVANISLPLLRRLGGNSCHTWLGLTCDCHHQLSAPSYRSASAIYSTSSKSKSASWTAAPILGTAFLVLPFLPASNLLFYVGFVMAERVLYLPSVGYCLLFGLGFGHLWQRVNSSWRSRLMLLCGLALLLGVHGVRTFRRNLDWRDEEQLFRSAISINPPKALGNLGSVLSAQGRYEEAELTLRMTLGHRPTMADAHFNLGVVHQKQLNFSSAIPCFRRAIELRPQLAVAYLNLGTSLISLGDHRQEAISVLRTGARLEGSGVRDRGAHVEARYTCYLQLSVLYRSDGRLQDAAAALRESLKALPLLPQKQRAVLHLRLGEILAELQDWNEAEHQQRLAMQLQPEQGAAYVTYGQTLARNGSRLAEAESWFKRALQLAPLEPSSHHHYADFLEQQERHHEALGLRLRAAALAPQDYTLQSCVADALRLLNRLAEAELWYRKAVTLQPMAAHAHANLGAILQMRGLRKEAVACYHKALELQPGHAISRANLARMNVHKHENE.

Residues Met1–Gly22 lie on the Cytoplasmic side of the membrane. The helical transmembrane segment at Leu23 to Val43 threads the bilayer. The Extracellular portion of the chain corresponds to Tyr44–Pro103. Residues Leu104 to Val124 form a helical membrane-spanning segment. Residues Ala125–Gly134 are Cytoplasmic-facing. Transmembrane regions (helical) follow at residues Val135–Gly154 and Leu155–Tyr174. Over Arg175 to Thr189 the chain is Cytoplasmic. A helical membrane pass occupies residues Ile190–Cys210. Residues Gly211–Arg245 lie on the Extracellular side of the membrane. The chain crosses the membrane as a helical span at residues Ser246–Pro266. Over Arg267–Arg288 the chain is Cytoplasmic. A helical membrane pass occupies residues Thr289–Leu309. Residues Ser310–Arg328 are Extracellular-facing. The chain crosses the membrane as a helical span at residues Asn329–Leu349. At Arg350–Thr422 the chain is on the cytoplasmic side. Residues Ala423–Met443 traverse the membrane as a helical segment. The Extracellular segment spans residues Ala444–Arg446. The chain crosses the membrane as a helical span at residues Val447–Trp467. Residues Gln468–Ser473 lie on the Cytoplasmic side of the membrane. A helical membrane pass occupies residues Trp474–Val493. Residues Arg494–Glu859 are Extracellular-facing. 9 TPR repeats span residues Pro518–Met551, Ala552–Leu585, Ala586–Gly620, Tyr632–Leu665, Ala671–Gln704, Gly705–Glu739, Pro740–Asp773, Tyr774–Ala807, and Ala808–His841. A glycan (N-linked (GlcNAc...) asparagine) is linked at Asn567. The N-linked (GlcNAc...) asparagine glycan is linked to Asn718.

The protein belongs to the TMTC family.

It localises to the membrane. Its subcellular location is the endoplasmic reticulum. The enzyme catalyses a di-trans,poly-cis-dolichyl beta-D-mannosyl phosphate + L-seryl-[protein] = 3-O-(alpha-D-mannosyl)-L-seryl-[protein] + a di-trans,poly-cis-dolichyl phosphate + H(+). The catalysed reaction is a di-trans,poly-cis-dolichyl beta-D-mannosyl phosphate + L-threonyl-[protein] = 3-O-(alpha-D-mannosyl)-L-threonyl-[protein] + a di-trans,poly-cis-dolichyl phosphate + H(+). It functions in the pathway protein modification; protein glycosylation. In terms of biological role, transfers mannosyl residues to the hydroxyl group of serine or threonine residues. This chain is Protein O-mannosyl-transferase Tmtc1, found in Drosophila melanogaster (Fruit fly).